Here is a 475-residue protein sequence, read N- to C-terminus: Transcription factor EB (475 aa).

The disordered stretch occupies residues 1 to 52 (MASRIGLRMQLMREQAQQEEQRERMQQQAVMHYMQQQQQQQQQLGGPPTPAI). An interaction with ACSS2 region spans residues 1–166 (MASRIGLRMQ…DDVIDNIMRL (166 aa)). Residues 26 to 43 (QQQAVMHYMQQQQQQQQQ) are compositionally biased toward low complexity. 4 positions are modified to phosphoserine: serine 108, serine 113, serine 121, and serine 137. Residues 135-152 (GNSAPNSPMAMLHISSNP) carry the Nuclear export signal motif. Position 141 is a phosphoserine; by MTOR (serine 141). Positions 155-164 (EFDDVIDNIM) are strong transcription activation domain. Threonine 182 is subject to Phosphothreonine. Position 210 is a phosphoserine; by MTOR (serine 210). S-(2,3-dicarboxypropyl)cysteine is present on cysteine 211. A bHLH domain is found at 234–287 (QKKDNHNLIERRRRFNINDRIKELGMLIPKANDLDVRWNKGTILKASVDYIRRM). Positions 244–247 (RRRR) match the Nuclear localization signal motif. Residues 297–318 (LENHSRRLEMTNKQLWLRIQEL) are leucine-zipper. A Phosphoserine modification is found at serine 331. Residues 351 to 429 (SEDGPGEALM…HGSPFPNLSK (79 aa)) are disordered. Positions 380-389 (LPSAAQPQSP) are enriched in low complexity. A phosphoserine mark is found at serine 422, serine 440, serine 465, serine 466, and serine 468. Residues 445–468 (ASDPLFSTMSPEASKASSRRSSFS) are compositionally biased toward low complexity. Residues 445–475 (ASDPLFSTMSPEASKASSRRSSFSMEEGDVL) form a disordered region.

It belongs to the MiT/TFE family. Homodimer and heterodimer; with TFE3 or MITF. Interacts (when phosphorylated by MTOR) with YWHAZ; promoting retention in the cytosol. Interacts with Irgm1; promoting association between TFEB and PPP3CB and dephosphorylation. Interacts with small GTPases Rag (RagA/RRAGA, RagB/RRAGB, RagC/RRAGC and/or RagD/RRAGD); promoting its recruitment to lysosomal membrane in the presence of nutrients. Interacts with ACSS2. Phosphorylation at Ser-210 by MTOR via non-canonical mTORC1 pathway regulates its subcellular location and activity. When nutrients are present, phosphorylation by MTOR promotes association with 14-3-3/YWHA adapters and retention in the cytosol. Inhibition of mTORC1, starvation and lysosomal disruption, promotes dephosphorylation by calcineurin PPP3CB and translocation to the nucleus. Dephosphorylated by calcineurin PPP3CB in response to lysosomal Ca(2+) release. Irgm1 promotes dephosphorylation by calcineurin PPP3CB, resulting in TFEB nuclear translocation and stimulation of lysosomal biogenesis. Exported from the nucleus in a mTORC1-dependent manner in response to nutrient availability. Post-translationally, alkylated via a non-enzymatic covalent modification. Itaconate, an anti-inflammatory metabolite generated in response to lipopolysaccharide, alkylates Cys-211, preventing association with 14-3-3/YWHA adapters, thereby promoting nuclear translocation and activity. In terms of processing, sumoylated; does not affect dimerization with MITF. Widely expressed.

It is found in the nucleus. It localises to the cytoplasm. The protein resides in the cytosol. The protein localises to the lysosome membrane. Transcription factor that acts as a master regulator of lysosomal biogenesis, autophagy, lysosomal exocytosis, lipid catabolism, energy metabolism and immune response. Specifically recognizes and binds E-box sequences (5'-CANNTG-3'); efficient DNA-binding requires dimerization with itself or with another MiT/TFE family member such as TFE3 or MITF. Involved in the cellular response to amino acid availability by acting downstream of MTOR: in the presence of nutrients, TFEB phosphorylation by MTOR promotes its cytosolic retention and subsequent inactivation. Upon starvation or lysosomal stress, inhibition of MTOR induces TFEB dephosphorylation, resulting in nuclear localization and transcription factor activity. Specifically recognizes and binds the CLEAR-box sequence (5'-GTCACGTGAC-3') present in the regulatory region of many lysosomal genes, leading to activate their expression, thereby playing a central role in expression of lysosomal genes. Regulates lysosomal positioning in response to nutrient deprivation by promoting the expression of PIP4P1. Acts as a positive regulator of autophagy by promoting expression of genes involved in autophagy. In association with TFE3, activates the expression of CD40L in T-cells, thereby playing a role in T-cell-dependent antibody responses in activated CD4(+) T-cells and thymus-dependent humoral immunity. Specifically recognizes the gamma-E3 box, a subset of E-boxes, present in the heavy-chain immunoglobulin enhancer. Plays a role in the signal transduction processes required for normal vascularization of the placenta. Involved in the immune response to infection by the bacteria S.aureus, S.typhimurium or S.enterica. Infection promotes itaconate production, leading to alkylation, resulting in nuclear localization and transcription factor activity. Itaconate-mediated alkylation activates TFEB-dependent lysosomal biogenesis, facilitating the bacteria clearance during the antibacterial innate immune response. In association with ACSS2, promotes the expression of genes involved in lysosome biogenesis and both autophagy upon glucose deprivation. This Mus musculus (Mouse) protein is Transcription factor EB.